The following is a 74-amino-acid chain: Heat shock factor-binding protein 1-like protein 1 (74 aa).

Residues 12–65 (RALRDAAENLFQELQEHFQALTATLNLRMEEMGNRIEDLQKNVKDLMVQAGIEN) adopt a coiled-coil conformation.

This sequence belongs to the HSBP1 family.

The protein is Heat shock factor-binding protein 1-like protein 1 (HSBP1L1) of Homo sapiens (Human).